The chain runs to 178 residues: Caveolin-1 (178 aa).

Ser2 carries the N-acetylserine modification. Residue Ser2 is modified to Phosphoserine. Residues 2–94 are required for homooligomerization; it reads SGGKYVDSEG…WKASFTTFTV (93 aa). The Cytoplasmic segment spans residues 2 to 104; the sequence is SGGKYVDSEG…TKYWFYRLLS (103 aa). Lys5 is subject to N6-acetyllysine; alternate. Residue Lys5 forms a Glycyl lysine isopeptide (Lys-Gly) (interchain with G-Cter in ubiquitin); alternate linkage. Tyr6 carries the phosphotyrosine modification. Ser9 carries the post-translational modification Phosphoserine. Tyr14 is subject to Phosphotyrosine; by ABL1. The residue at position 25 (Tyr25) is a Phosphotyrosine. Glycyl lysine isopeptide (Lys-Gly) (interchain with G-Cter in ubiquitin) cross-links involve residues Lys26, Lys30, Lys39, Lys47, and Lys57. Residues 82 to 94 form an interaction with CAVIN3 region; sequence DGIWKASFTTFTV. The segment at residues 105-125 is an intramembrane region (helical); the sequence is ALFGIPMALIWGIYFAILSFL. At 126–178 the chain is on the cytoplasmic side; the sequence is HIWAVVPCIKSFLIEIQCVSRVYSIYVHTFCDPFFEAVGKIFSSIRINMQKEI. Residues 131-142 are interacts with SPRY1, SPRY2, SPRY3 and SPRY4; sequence VPCIKSFLIEIQ. 3 S-palmitoyl cysteine lipidation sites follow: Cys133, Cys143, and Cys156. The tract at residues 149–160 is interacts with SPRY1, SPRY2, and SPRY4; that stretch reads SIYVHTFCDPFF. An interacts with SPRY1, SPRY2, SPRY3 and SPRY4 region spans residues 167 to 178; sequence FSSIRINMQKEI.

It belongs to the caveolin family. In terms of assembly, homooligomer. Interacts with GLIPR2. Interacts with NOSTRIN. Interacts with SNAP25 and STX1A. Interacts (via the N-terminus) with DPP4; the interaction is direct. Interacts with CTNNB1, CDH1 and JUP. Interacts with PACSIN2; this interaction induces membrane tubulation. Interacts with SLC7A9. Interacts with BMX and BTK. Interacts with TGFBR1. Interacts with CAVIN3 (via leucine-zipper domain) in a cholesterol-sensitive manner. Interacts with CAVIN1. Interacts with EHD2 in a cholesterol-dependent manner. Forms a ternary complex with UBXN6 and VCP; mediates CAV1 targeting to lysosomes for degradation. Interacts with ABCG1; this interaction regulates ABCG1-mediated cholesterol efflux. Interacts with NEU3; this interaction enhances NEU3 sialidase activity within caveola. Interacts (via C-terminus) with SPRY1, SPRY2 (via C-terminus), SPRY3, and SPRY4. Interacts with IGFBP5; this interaction allows trafficking of IGFBP5 from the plasma membrane to the nucleus. Phosphorylated at Tyr-14 by ABL1 in response to oxidative stress. In terms of processing, ubiquitinated. Undergo monoubiquitination and multi- and/or polyubiquitination. Monoubiquitination of N-terminal lysines promotes integration in a ternary complex with UBXN6 and VCP which promotes oligomeric CAV1 targeting to lysosomes for degradation. Ubiquitinated by ZNRF1; leading to degradation and modulation of the TLR4-mediated immune response.

It is found in the golgi apparatus membrane. The protein resides in the cell membrane. The protein localises to the membrane. It localises to the caveola. Its subcellular location is the membrane raft. In terms of biological role, may act as a scaffolding protein within caveolar membranes. Forms a stable heterooligomeric complex with CAV2 that targets to lipid rafts and drives caveolae formation. Mediates the recruitment of CAVIN proteins (CAVIN1/2/3/4) to the caveolae. Interacts directly with G-protein alpha subunits and can functionally regulate their activity. Involved in the costimulatory signal essential for T-cell receptor (TCR)-mediated T-cell activation. Its binding to DPP4 induces T-cell proliferation and NF-kappa-B activation in a T-cell receptor/CD3-dependent manner. Recruits CTNNB1 to caveolar membranes and may regulate CTNNB1-mediated signaling through the Wnt pathway. Negatively regulates TGFB1-mediated activation of SMAD2/3 by mediating the internalization of TGFBR1 from membrane rafts leading to its subsequent degradation. Binds 20(S)-hydroxycholesterol (20(S)-OHC). This Mustela putorius furo (European domestic ferret) protein is Caveolin-1 (CAV1).